The sequence spans 84 residues: Cell division topological specificity factor (84 aa).

Belongs to the MinE family.

Its function is as follows. Prevents the cell division inhibition by proteins MinC and MinD at internal division sites while permitting inhibition at polar sites. This ensures cell division at the proper site by restricting the formation of a division septum at the midpoint of the long axis of the cell. The chain is Cell division topological specificity factor from Pseudomonas syringae pv. syringae (strain B728a).